Consider the following 240-residue polypeptide: Phosphatidylserine decarboxylase proenzyme (240 aa).

Residue Ser-209 is the Schiff-base intermediate with substrate; via pyruvic acid of the active site. The residue at position 209 (Ser-209) is a Pyruvic acid (Ser); by autocatalysis.

Belongs to the phosphatidylserine decarboxylase family. PSD-A subfamily. Heterodimer of a large membrane-associated beta subunit and a small pyruvoyl-containing alpha subunit. Requires pyruvate as cofactor. Post-translationally, is synthesized initially as an inactive proenzyme. Formation of the active enzyme involves a self-maturation process in which the active site pyruvoyl group is generated from an internal serine residue via an autocatalytic post-translational modification. Two non-identical subunits are generated from the proenzyme in this reaction, and the pyruvate is formed at the N-terminus of the alpha chain, which is derived from the carboxyl end of the proenzyme. The post-translation cleavage follows an unusual pathway, termed non-hydrolytic serinolysis, in which the side chain hydroxyl group of the serine supplies its oxygen atom to form the C-terminus of the beta chain, while the remainder of the serine residue undergoes an oxidative deamination to produce ammonia and the pyruvoyl prosthetic group on the alpha chain.

It localises to the cell membrane. The enzyme catalyses a 1,2-diacyl-sn-glycero-3-phospho-L-serine + H(+) = a 1,2-diacyl-sn-glycero-3-phosphoethanolamine + CO2. It participates in phospholipid metabolism; phosphatidylethanolamine biosynthesis; phosphatidylethanolamine from CDP-diacylglycerol: step 2/2. Its function is as follows. Catalyzes the formation of phosphatidylethanolamine (PtdEtn) from phosphatidylserine (PtdSer). The sequence is that of Phosphatidylserine decarboxylase proenzyme from Mycobacterium avium (strain 104).